A 931-amino-acid polypeptide reads, in one-letter code: NEDD4-binding protein 1 (931 aa).

A KH-like domain is found at 75 to 159; it reads GKAVRSAKEY…VQQFVKLFEN (85 aa). 3 disordered regions span residues 289 to 329, 413 to 474, and 547 to 571; these read MTSK…HNDS, QEWS…TQVD, and CTSA…NSHS. Composition is skewed to basic and acidic residues over residues 290–309 and 319–329; these read TSKE…ESLP and QEVKSVSHNDS. The segment covering 416-434 has biased composition (polar residues); that stretch reads SSKTPKTTNLRLGSNANSS. 2 stretches are compositionally biased toward basic and acidic residues: residues 435 to 444 and 456 to 467; these read HKLEDEDISC and NETRTERHKARD. The segment covering 547–557 has biased composition (polar residues); sequence CTSAKSKTAVH. The 153-residue stretch at 659-811 folds into the RNase NYN domain; sequence LKHIIIDGSN…LGRNGPRLDD (153 aa). The interval 841 to 863 is disordered; that stretch reads LFMHVPNPASSSQQPKNRAHGDH. The interval 884 to 931 is coCUN; sequence RSASETVWLREALIKIFPDYEQRQKIDKILADHPFMRDLNALSAMVLD.

The protein belongs to the N4BP1 family.

It localises to the cytoplasm. Its subcellular location is the cytosol. The protein localises to the nucleus. The protein resides in the nucleolus. It is found in the PML body. Functionally, potent suppressor of cytokine production that acts as a regulator of innate immune signaling and inflammation. Acts as a key negative regulator of select cytokine and chemokine responses elicited by TRIF-independent Toll-like receptors (TLRs), thereby limiting inflammatory cytokine responses to minor insults. Has ribonuclease activity. The sequence is that of NEDD4-binding protein 1 from Gallus gallus (Chicken).